We begin with the raw amino-acid sequence, 1423 residues long: DNA-directed RNA polymerase subunit beta' (1423 aa).

Positions 71, 73, 86, and 89 each coordinate Zn(2+). Mg(2+) is bound by residues Asp461, Asp463, and Asp465. Positions 815, 889, 896, and 899 each coordinate Zn(2+).

This sequence belongs to the RNA polymerase beta' chain family. The RNAP catalytic core consists of 2 alpha, 1 beta, 1 beta' and 1 omega subunit. When a sigma factor is associated with the core the holoenzyme is formed, which can initiate transcription. The cofactor is Mg(2+). It depends on Zn(2+) as a cofactor.

It carries out the reaction RNA(n) + a ribonucleoside 5'-triphosphate = RNA(n+1) + diphosphate. Functionally, DNA-dependent RNA polymerase catalyzes the transcription of DNA into RNA using the four ribonucleoside triphosphates as substrates. The polypeptide is DNA-directed RNA polymerase subunit beta' (Actinobacillus pleuropneumoniae serotype 7 (strain AP76)).